The chain runs to 1214 residues: Filamin-A-interacting protein 1 (1214 aa).

The span at 1 to 15 shows a compositional bias: polar residues; the sequence is MRSRNQGGESSSNGH. The disordered stretch occupies residues 1–73; sequence MRSRNQGGES…ESEKKTKKPL (73 aa). Basic and acidic residues-rich tracts occupy residues 32-47 and 61-73; these read PSEDAKKNKANRKGED and PSGESEKKTKKPL. Residue S138 is modified to Phosphoserine. Coiled coils occupy residues 192–581 and 624–778; these read DYMN…KLRS and PEDN…ELEL. 2 disordered regions span residues 875–898 and 949–976; these read KRENGPSAPQEKGPRPNQGTGHPG and KPRITIIPSPNVMSQKPKSADPTLGPER. Phosphoserine is present on S979. The tract at residues 1104-1192 is disordered; it reads VSTGTVLRSP…TKFQPRAETQ (89 aa). Over residues 1126-1140 the composition is skewed to low complexity; the sequence is VTSTITITPVTTSST. Residues 1141-1157 show a composition bias toward polar residues; sequence RGTQSVSGQDGSSQRPT. Residues 1169–1180 are compositionally biased toward low complexity; that stretch reads AGKPVVAAPGAG.

It belongs to the FILIP1 family. In terms of assembly, interacts with FLNA. Interacts with RHOD (in GTP-bound form).

It localises to the cytoplasm. It is found in the cytoskeleton. By acting through a filamin-A/F-actin axis, it controls the start of neocortical cell migration from the ventricular zone. May be able to induce the degradation of filamin-A. This chain is Filamin-A-interacting protein 1 (Filip1), found in Mus musculus (Mouse).